Reading from the N-terminus, the 59-residue chain is Large ribosomal subunit protein uL30 (59 aa).

It belongs to the universal ribosomal protein uL30 family. In terms of assembly, part of the 50S ribosomal subunit.

The sequence is that of Large ribosomal subunit protein uL30 from Streptococcus agalactiae serotype Ia (strain ATCC 27591 / A909 / CDC SS700).